The sequence spans 612 residues: Coagulation factor XII (612 aa).

Residues 1–19 (MRALLLLGALLVSLESTVS) form the signal peptide. The Fibronectin type-II domain maps to 42 to 90 (VTGEPCHFPFQYHRQLHHKCIHRGRPGPRPWCATTPNFEKDQRWAYCLE). 20 disulfides stabilise this stretch: Cys-47–Cys-73, Cys-61–Cys-88, Cys-98–Cys-110, Cys-104–Cys-119, Cys-121–Cys-130, Cys-135–Cys-163, Cys-161–Cys-170, Cys-178–Cys-189, Cys-183–Cys-198, Cys-200–Cys-209, Cys-217–Cys-306, Cys-240–Cys-288, Cys-268–Cys-301, Cys-355–Cys-482, Cys-393–Cys-409, Cys-401–Cys-471, Cys-432–Cys-435, Cys-498–Cys-566, Cys-529–Cys-545, and Cys-556–Cys-587. Residues 94–131 (VKDHCSKHNPCQKGGTCVNMPDGPRCICADHFTGKHCQ) enclose the EGF-like 1 domain. Thr-109 is a glycosylation site (O-linked (Fuc) threonine). Positions 133-173 (EKCFEPQFFRFFHENEIWHRLEPAGVVKCQCKGPNAQCKPL) constitute a Fibronectin type-I domain. Positions 174-210 (ASQVCRTNPCLNGGSCLQAEGHRLCRCAPSFAGRLCD) constitute an EGF-like 2 domain. The Kringle domain maps to 217 to 306 (CYDDRDRGLS…SWNYCRLAPC (90 aa)). Asn-251 and Asn-282 each carry an N-linked (GlcNAc...) asparagine glycan. Residues 369–611 (VVGGLVALPG…YLAWIREHTA (243 aa)) enclose the Peptidase S1 domain. His-408 (charge relay system) is an active-site residue. Asn-429 carries N-linked (GlcNAc...) asparagine glycosylation. Residue Asp-457 is the Charge relay system of the active site. The active-site Charge relay system is Ser-560.

It belongs to the peptidase S1 family. In terms of assembly, interacts with HRG; the interaction, which is enhanced in the presence of zinc ions and inhibited by heparin-binding, inhibits factor XII autoactivation and contact-initiated coagulation. In terms of processing, O- and N-glycosylated.

It localises to the secreted. It carries out the reaction Selective cleavage of Arg-|-Ile bonds in factor VII to form factor VIIa and factor XI to form factor XIa.. Its activity is regulated as follows. Activity is promoted in the presence of negatively charged surfaces. Functionally, factor XII is a serum glycoprotein that participates in the initiation of blood coagulation, fibrinolysis, and the generation of bradykinin and angiotensin. Prekallikrein is cleaved by factor XII to form kallikrein, which then cleaves factor XII first to alpha-factor XIIa and then to beta-factor XIIa. Alpha-factor XIIa activates factor XI to factor XIa. The polypeptide is Coagulation factor XII (F12) (Bos taurus (Bovine)).